A 306-amino-acid polypeptide reads, in one-letter code: Acetylglutamate kinase (306 aa).

Substrate-binding positions include 79–80 (GG), Arg101, and Asn203.

It belongs to the acetylglutamate kinase family. ArgB subfamily.

It localises to the cytoplasm. It carries out the reaction N-acetyl-L-glutamate + ATP = N-acetyl-L-glutamyl 5-phosphate + ADP. It functions in the pathway amino-acid biosynthesis; L-arginine biosynthesis; N(2)-acetyl-L-ornithine from L-glutamate: step 2/4. Functionally, catalyzes the ATP-dependent phosphorylation of N-acetyl-L-glutamate. This Polaromonas naphthalenivorans (strain CJ2) protein is Acetylglutamate kinase.